We begin with the raw amino-acid sequence, 159 residues long: Deoxyuridine 5'-triphosphate nucleotidohydrolase (159 aa).

Residues 78–80 (RSG), Asn91, 95–97 (LID), and Met105 contribute to the substrate site.

Belongs to the dUTPase family. The cofactor is Mg(2+).

It carries out the reaction dUTP + H2O = dUMP + diphosphate + H(+). It participates in pyrimidine metabolism; dUMP biosynthesis; dUMP from dCTP (dUTP route): step 2/2. Its function is as follows. This enzyme is involved in nucleotide metabolism: it produces dUMP, the immediate precursor of thymidine nucleotides and it decreases the intracellular concentration of dUTP so that uracil cannot be incorporated into DNA. The chain is Deoxyuridine 5'-triphosphate nucleotidohydrolase from Buchnera aphidicola subsp. Schizaphis graminum (strain Sg).